The sequence spans 168 residues: Zinc-finger homeodomain protein 14 (168 aa).

The segment at 7–51 (YRECMRNHAAKLGSYAIDGCREYSQPSTGDLCVACGCHRSYHRRI) adopts a ZF-HD dimerization-type; degenerate zinc-finger fold. Positions 76–103 (ARLKWKTAEERNEEEEDDTEETSTEEKM) form a coiled coil. Residues 82–112 (TAEERNEEEEDDTEETSTEEKMTVQRRRKSK) form a disordered region. A compositionally biased stretch (acidic residues) spans 86–98 (RNEEEEDDTEETS). Positions 106 to 168 (QRRRKSKFTA…WVNNNKKFYH (63 aa)) form a DNA-binding region, homeobox.

Homo- and heterodimer with other ZFHD proteins. Interacts with ZHD11. In terms of tissue distribution, mostly expressed in flowers and stems.

It is found in the nucleus. In terms of biological role, putative transcription factor. The polypeptide is Zinc-finger homeodomain protein 14 (ZHD14) (Arabidopsis thaliana (Mouse-ear cress)).